The following is a 76-amino-acid chain: uncharacterized protein (76 aa).

This is an uncharacterized protein from Sulfolobus islandicus rod-shaped virus 1 (SIRV-1).